Here is a 134-residue protein sequence, read N- to C-terminus: Retinoid-binding protein 7 (134 aa).

This sequence belongs to the calycin superfamily. Fatty-acid binding protein (FABP) family. As to expression, expressed primarily in kidney, heart and transverse colon. Detected in adult lymph node, appendix, ascending colon, and in fetal heart and spleen.

It is found in the cytoplasm. In terms of biological role, intracellular transport of retinol. The chain is Retinoid-binding protein 7 (RBP7) from Homo sapiens (Human).